A 515-amino-acid chain; its full sequence is Fatty acyl-CoA reductase 1 (515 aa).

Over 1–465 (MVSIPEYYEG…ARKHLNKLRN (465 aa)) the chain is Cytoplasmic. The interval 451 to 507 (SGLPAARKHLNKLRNIRYGFNTILVILIWRIFIARSQMARNIWYFVVSLCYKFLSYF) is necessary and sufficient for PEX19-mediated localization into peroxisome membrane. A helical membrane pass occupies residues 466 to 483 (IRYGFNTILVILIWRIFI). Residues 484 to 515 (ARSQMARNIWYFVVSLCYKFLSYFRASSTMRY) are Peroxisomal-facing.

The protein belongs to the fatty acyl-CoA reductase family. In terms of assembly, interacts with PEX19; PEX19 mediates the targeting of FAR1 to peroxisomes.

It is found in the peroxisome membrane. It catalyses the reaction a long-chain fatty acyl-CoA + 2 NADPH + 2 H(+) = a long-chain primary fatty alcohol + 2 NADP(+) + CoA. It carries out the reaction hexadecanoyl-CoA + 2 NADPH + 2 H(+) = hexadecan-1-ol + 2 NADP(+) + CoA. The enzyme catalyses octadecanoyl-CoA + 2 NADPH + 2 H(+) = octadecan-1-ol + 2 NADP(+) + CoA. The catalysed reaction is (9Z)-octadecenoyl-CoA + 2 NADPH + 2 H(+) = (9Z)-octadecen-1-ol + 2 NADP(+) + CoA. It catalyses the reaction (9Z,12Z)-octadecadienoyl-CoA + 2 NADPH + 2 H(+) = (9Z,12Z)-octadecadien-1-ol + 2 NADP(+) + CoA. It carries out the reaction eicosanoyl-CoA + 2 NADPH + 2 H(+) = eicosan-1-ol + 2 NADP(+) + CoA. The enzyme catalyses 16-methylheptadecanoyl-CoA + 2 NADPH + 2 H(+) = 16-methylheptadecan-1-ol + 2 NADP(+) + CoA. The catalysed reaction is 18-methylnonadecanoyl-CoA + 2 NADPH + 2 H(+) = 18-methylnonadecan-1-ol + 2 NADP(+) + CoA. Functionally, catalyzes the reduction of saturated and unsaturated C16 or C18 fatty acyl-CoA to fatty alcohols. It plays an essential role in the production of ether lipids/plasmalogens which synthesis requires fatty alcohols. In parallel, it is also required for wax monoesters production since fatty alcohols also constitute a substrate for their synthesis. In terms of biological role, catalyzes the reduction of saturated and unsaturated C16 or C18 fatty acyl-CoA to fatty alcohols. It plays an essential role in the production of ether lipids/plasmalogens which synthesis requires fatty alcohols. In parallel, it is also required for wax monoesters production since fatty alcohols also constitute a substrate for their synthesis. The sequence is that of Fatty acyl-CoA reductase 1 from Rattus norvegicus (Rat).